We begin with the raw amino-acid sequence, 420 residues long: MSFPRGSYDPAASNSSPWWPLSAEDANSSWEAAGHQKGSDPSGDVRNEELAKLEIAVLAVIFVVAVLGNSSVLLALHRTPRKTSRMHLFIRHLSLADLAVAFFQVLPQLCWDITYRFRGPDWLCRVVKHLQVFAMFASAYMLVVMTADRYIAVCHPLKTLQQPTRRSRLMIAASWVLSFLLSTPQYFIFSMIEIEVNNGTKTQDCWATFIQPWGTRAYVTWMTSGVFVVPVVILGTCYGFICYHIWRNVRGKTASRQSKGSGEDVAPFHKGLLVTPCVSSVKTISRAKIRTVKMTFVIVTAYILCWAPFFIVQMWSVWDDNFIWTDSENPSITITALLASLNSCCNPWIYMFFSGHLLQDCVQSFPCCQRMVQKFTKDDSDNMSRRHTSYSNNRSPTNSTGTWKDSPKSSRSIRFIPVST.

A disordered region spans residues 1–20; it reads MSFPRGSYDPAASNSSPWWP. Topologically, residues 1–54 are extracellular; it reads MSFPRGSYDPAASNSSPWWPLSAEDANSSWEAAGHQKGSDPSGDVRNEELAKLE. An N-linked (GlcNAc...) asparagine glycan is attached at asparagine 27. A helical membrane pass occupies residues 55–75; the sequence is IAVLAVIFVVAVLGNSSVLLA. Topologically, residues 76–92 are cytoplasmic; sequence LHRTPRKTSRMHLFIRH. Residues 93 to 113 traverse the membrane as a helical segment; the sequence is LSLADLAVAFFQVLPQLCWDI. Topologically, residues 114-125 are extracellular; it reads TYRFRGPDWLCR. Cysteine 124 and cysteine 205 are oxidised to a cystine. Residues 126–146 form a helical membrane-spanning segment; the sequence is VVKHLQVFAMFASAYMLVVMT. At 147-168 the chain is on the cytoplasmic side; the sequence is ADRYIAVCHPLKTLQQPTRRSR. The helical transmembrane segment at 169–189 threads the bilayer; sequence LMIAASWVLSFLLSTPQYFIF. Residues 190 to 225 are Extracellular-facing; it reads SMIEIEVNNGTKTQDCWATFIQPWGTRAYVTWMTSG. Asparagine 198 carries N-linked (GlcNAc...) asparagine glycosylation. The chain crosses the membrane as a helical span at residues 226 to 246; it reads VFVVPVVILGTCYGFICYHIW. The Cytoplasmic portion of the chain corresponds to 247-294; it reads RNVRGKTASRQSKGSGEDVAPFHKGLLVTPCVSSVKTISRAKIRTVKM. Residues 295 to 315 form a helical membrane-spanning segment; that stretch reads TFVIVTAYILCWAPFFIVQMW. The Extracellular portion of the chain corresponds to 316–331; sequence SVWDDNFIWTDSENPS. A helical membrane pass occupies residues 332 to 352; the sequence is ITITALLASLNSCCNPWIYMF. Topologically, residues 353 to 420 are cytoplasmic; that stretch reads FSGHLLQDCV…RSIRFIPVST (68 aa). 2 S-palmitoyl cysteine lipidation sites follow: cysteine 367 and cysteine 368. The tract at residues 379-411 is disordered; that stretch reads DSDNMSRRHTSYSNNRSPTNSTGTWKDSPKSSR. The segment covering 389 to 403 has biased composition (polar residues); sequence SYSNNRSPTNSTGTW. At serine 406 the chain carries Phosphoserine.

The protein belongs to the G-protein coupled receptor 1 family. Vasopressin/oxytocin receptor subfamily.

It is found in the cell membrane. Its function is as follows. Receptor for arginine vasopressin. The activity of this receptor is mediated by G proteins which activate a phosphatidyl-inositol-calcium second messenger system. Involved in social memory formation. The polypeptide is Vasopressin V1a receptor (Avpr1a) (Microtus ochrogaster (Prairie vole)).